The following is a 701-amino-acid chain: Cytosolic endo-beta-N-acetylglucosaminidase 2 (701 aa).

The protein belongs to the glycosyl hydrolase 85 family.

It is found in the cytoplasm. The protein resides in the cytosol. The enzyme catalyses an N(4)-(oligosaccharide-(1-&gt;3)-[oligosaccharide-(1-&gt;6)]-beta-D-Man-(1-&gt;4)-beta-D-GlcNAc-(1-&gt;4)-alpha-D-GlcNAc)-L-asparaginyl-[protein] + H2O = an oligosaccharide-(1-&gt;3)-[oligosaccharide-(1-&gt;6)]-beta-D-Man-(1-&gt;4)-D-GlcNAc + N(4)-(N-acetyl-beta-D-glucosaminyl)-L-asparaginyl-[protein]. Endoglycosidase that releases N-glycans from glycoproteins by cleaving the beta-1,4-glycosidic bond in the N,N'-diacetylchitobiose core. Involved in the production of high-mannose type N-glycans during plant development and fruit maturation. In Arabidopsis thaliana (Mouse-ear cress), this protein is Cytosolic endo-beta-N-acetylglucosaminidase 2.